The sequence spans 1096 residues: Carbamoyl phosphate synthase large chain (1096 aa).

The segment at 1-402 is carboxyphosphate synthetic domain; sequence MPKRDDINSV…ALQKALRSLE (402 aa). Positions 129, 169, 175, 176, 208, 210, 215, 241, 242, 243, 285, and 299 each coordinate ATP. An ATP-grasp 1 domain is found at 133 to 328; that stretch reads KDLVIESGAD…IAKIAAKLAI (196 aa). Mg(2+) is bound by residues glutamine 285, glutamate 299, and asparagine 301. Residues glutamine 285, glutamate 299, and asparagine 301 each coordinate Mn(2+). The oligomerization domain stretch occupies residues 403 to 547; sequence KRGSSFHWGP…YSSYDSETEI (145 aa). Residues 548–950 form a carbamoyl phosphate synthetic domain region; the sequence is VPSDRRKVII…AFAKSQEAAF (403 aa). Positions 676 to 870 constitute an ATP-grasp 2 domain; that stretch reads SGILDTAGLV…LAKAASLVMV (195 aa). ATP-binding residues include arginine 712, arginine 754, leucine 756, glutamate 761, glycine 786, isoleucine 787, histidine 788, serine 789, glutamine 829, and glutamate 841. 3 residues coordinate Mg(2+): glutamine 829, glutamate 841, and asparagine 843. Glutamine 829, glutamate 841, and asparagine 843 together coordinate Mn(2+). The region spanning 951 to 1095 is the MGS-like domain; it reads GGLPLSGTVF…QDYAIAREAR (145 aa). The interval 951 to 1096 is allosteric domain; it reads GGLPLSGTVF…DYAIAREARR (146 aa).

Belongs to the CarB family. Composed of two chains; the small (or glutamine) chain promotes the hydrolysis of glutamine to ammonia, which is used by the large (or ammonia) chain to synthesize carbamoyl phosphate. Tetramer of heterodimers (alpha,beta)4. The cofactor is Mg(2+). Mn(2+) is required as a cofactor.

It catalyses the reaction hydrogencarbonate + L-glutamine + 2 ATP + H2O = carbamoyl phosphate + L-glutamate + 2 ADP + phosphate + 2 H(+). The catalysed reaction is hydrogencarbonate + NH4(+) + 2 ATP = carbamoyl phosphate + 2 ADP + phosphate + 2 H(+). It functions in the pathway amino-acid biosynthesis; L-arginine biosynthesis; carbamoyl phosphate from bicarbonate: step 1/1. Its pathway is pyrimidine metabolism; UMP biosynthesis via de novo pathway; (S)-dihydroorotate from bicarbonate: step 1/3. Its function is as follows. Large subunit of the glutamine-dependent carbamoyl phosphate synthetase (CPSase). CPSase catalyzes the formation of carbamoyl phosphate from the ammonia moiety of glutamine, carbonate, and phosphate donated by ATP, constituting the first step of 2 biosynthetic pathways, one leading to arginine and/or urea and the other to pyrimidine nucleotides. The large subunit (synthetase) binds the substrates ammonia (free or transferred from glutamine from the small subunit), hydrogencarbonate and ATP and carries out an ATP-coupled ligase reaction, activating hydrogencarbonate by forming carboxy phosphate which reacts with ammonia to form carbamoyl phosphate. In Clavibacter michiganensis subsp. michiganensis (strain NCPPB 382), this protein is Carbamoyl phosphate synthase large chain.